The sequence spans 598 residues: Transcription factor COE3 (598 aa).

A disordered region spans residues 1 to 23; it reads MFGIQENIPRGGTTMKEEPLGGG. The interaction with DNA stretch occupies residues 63-66; sequence RKSN. The C5-type zinc finger occupies 151–170; that stretch reads CRVLLTHEIMCSRCCDKKSC. 2 interaction with DNA regions span residues 197-204 and 236-239; these read NCLKNAGN and NNSK. The region spanning 264-347 is the IPT/TIG domain; that stretch reads PCIKAISPSE…KGAPGRFVYT (84 aa). Residues 452 to 483 form a disordered region; the sequence is TSQANDQVGYSRNTSSVSPRGYVPSSTPQQSN.

It belongs to the COE family. In terms of assembly, forms either a homodimer or a heterodimer with a related family member.

It localises to the nucleus. Acts as a transcriptional activator. This chain is Transcription factor COE3 (coe3), found in Xenopus laevis (African clawed frog).